Reading from the N-terminus, the 335-residue chain is Glyceraldehyde-3-phosphate dehydrogenase (335 aa).

NAD(+) is bound by residues 12–13, D34, and R79; that span reads RI. D-glyceraldehyde 3-phosphate-binding positions include 150 to 152, T181, 210 to 211, and R233; these read SCT and TG. Catalysis depends on C151, which acts as the Nucleophile. N315 is a binding site for NAD(+).

Belongs to the glyceraldehyde-3-phosphate dehydrogenase family. Homotetramer.

The protein localises to the cytoplasm. The enzyme catalyses D-glyceraldehyde 3-phosphate + phosphate + NAD(+) = (2R)-3-phospho-glyceroyl phosphate + NADH + H(+). Its pathway is carbohydrate degradation; glycolysis; pyruvate from D-glyceraldehyde 3-phosphate: step 1/5. This Ogataea parapolymorpha (strain ATCC 26012 / BCRC 20466 / JCM 22074 / NRRL Y-7560 / DL-1) (Yeast) protein is Glyceraldehyde-3-phosphate dehydrogenase (GPD).